Reading from the N-terminus, the 485-residue chain is Polyol:NADP oxidoreductase (485 aa).

It belongs to the mannitol dehydrogenase family.

It is found in the cytoplasm. The sequence is that of Polyol:NADP oxidoreductase (por) from Gluconobacter oxydans (strain 621H) (Gluconobacter suboxydans).